Consider the following 505-residue polypeptide: N-succinylglutamate 5-semialdehyde dehydrogenase (505 aa).

An NAD(+)-binding site is contributed by 234–239; that stretch reads GSAHTG. Residues glutamate 257 and cysteine 291 contribute to the active site.

Belongs to the aldehyde dehydrogenase family. AstD subfamily.

The enzyme catalyses N-succinyl-L-glutamate 5-semialdehyde + NAD(+) + H2O = N-succinyl-L-glutamate + NADH + 2 H(+). It functions in the pathway amino-acid degradation; L-arginine degradation via AST pathway; L-glutamate and succinate from L-arginine: step 4/5. In terms of biological role, catalyzes the NAD-dependent reduction of succinylglutamate semialdehyde into succinylglutamate. This Yersinia pestis (strain Pestoides F) protein is N-succinylglutamate 5-semialdehyde dehydrogenase.